The following is a 1171-amino-acid chain: DNA polymerase catalytic subunit (1171 aa).

Disordered stretches follow at residues 647–687, 704–735, and 1149–1171; these read GTPA…PFRT, PGGG…EPAP, and VEEE…DSSR. Positions 649-662 are enriched in pro residues; sequence PARPPETPARPPET. Low complexity-rich tracts occupy residues 663-674 and 709-725; these read PAAGPSGAAHAG and VSSA…PSET. Over residues 1149–1158 the composition is skewed to basic and acidic residues; that stretch reads VEEEVCESER.

This sequence belongs to the DNA polymerase type-B family.

The protein localises to the host nucleus. The catalysed reaction is DNA(n) + a 2'-deoxyribonucleoside 5'-triphosphate = DNA(n+1) + diphosphate. The chain is DNA polymerase catalytic subunit (DPOL) from Tupaia belangeri (Common tree shrew).